The primary structure comprises 166 residues: Large ribosomal subunit protein uL10 (166 aa).

Belongs to the universal ribosomal protein uL10 family. As to quaternary structure, part of the ribosomal stalk of the 50S ribosomal subunit. The N-terminus interacts with L11 and the large rRNA to form the base of the stalk. The C-terminus forms an elongated spine to which L12 dimers bind in a sequential fashion forming a multimeric L10(L12)X complex.

Forms part of the ribosomal stalk, playing a central role in the interaction of the ribosome with GTP-bound translation factors. The polypeptide is Large ribosomal subunit protein uL10 (Marinomonas sp. (strain MWYL1)).